The chain runs to 176 residues: Cytochrome b (176 aa).

A run of 3 helical transmembrane segments spans residues 33–53 (FGSLLGVCLTVQILTGLFLAM), 77–98 (WLLRYLHANGASMFFICLYLHV), and 113–133 (WNVGVILLFAVMATAFMGYVL). 2 residues coordinate heme b: histidine 83 and histidine 97.

It belongs to the cytochrome b family. The cytochrome bc1 complex contains 11 subunits: 3 respiratory subunits (MT-CYB, CYC1 and UQCRFS1), 2 core proteins (UQCRC1 and UQCRC2) and 6 low-molecular weight proteins (UQCRH/QCR6, UQCRB/QCR7, UQCRQ/QCR8, UQCR10/QCR9, UQCR11/QCR10 and a cleavage product of UQCRFS1). This cytochrome bc1 complex then forms a dimer. Requires heme b as cofactor.

Its subcellular location is the mitochondrion inner membrane. Its function is as follows. Component of the ubiquinol-cytochrome c reductase complex (complex III or cytochrome b-c1 complex) that is part of the mitochondrial respiratory chain. The b-c1 complex mediates electron transfer from ubiquinol to cytochrome c. Contributes to the generation of a proton gradient across the mitochondrial membrane that is then used for ATP synthesis. The chain is Cytochrome b (MT-CYB) from Mormopterus kalinowskii (Kalinowski's mastiff bat).